A 38-amino-acid chain; its full sequence is Antifungal protein 5 (38 aa).

The protein belongs to the plant LTP family.

Its function is as follows. Possesses potent antifungal activity against F.graminearum but not P.infestans. This is Antifungal protein 5 from Malva parviflora (Little mallow).